A 122-amino-acid chain; its full sequence is Large ribosomal subunit protein uL14 (122 aa).

This sequence belongs to the universal ribosomal protein uL14 family. Part of the 50S ribosomal subunit. Forms a cluster with proteins L3 and L19. In the 70S ribosome, L14 and L19 interact and together make contacts with the 16S rRNA in bridges B5 and B8.

In terms of biological role, binds to 23S rRNA. Forms part of two intersubunit bridges in the 70S ribosome. The chain is Large ribosomal subunit protein uL14 from Natranaerobius thermophilus (strain ATCC BAA-1301 / DSM 18059 / JW/NM-WN-LF).